The primary structure comprises 166 residues: 3-isopropylmalate dehydratase small subunit (166 aa).

This sequence belongs to the LeuD family. LeuD type 2 subfamily. In terms of assembly, heterodimer of LeuC and LeuD.

It carries out the reaction (2R,3S)-3-isopropylmalate = (2S)-2-isopropylmalate. The protein operates within amino-acid biosynthesis; L-leucine biosynthesis; L-leucine from 3-methyl-2-oxobutanoate: step 2/4. Functionally, catalyzes the isomerization between 2-isopropylmalate and 3-isopropylmalate, via the formation of 2-isopropylmaleate. The polypeptide is 3-isopropylmalate dehydratase small subunit (Caldicellulosiruptor bescii (strain ATCC BAA-1888 / DSM 6725 / KCTC 15123 / Z-1320) (Anaerocellum thermophilum)).